Reading from the N-terminus, the 878-residue chain is MNEQYSAMRSNVSMLGTLLGDTIKEALGEHILDRVETIRKLSKSSRAGNEASRQELLTTLQNLSNDELLPVARAFSQFLNLTNTAEQYHSISPHGEAASNPEALAQLFTRLKDKKLSDQDMRSAVDDLSIELVLTAHPTEITRRTLIHKLVEVNTCLSQLDHNDLADYERNKIMRRLRQLVAQSWHTDEIRKLRPSPVDEAKWGFAVVENSLWEGVPAFLREFNEQLENSLDYRLPVEAVPIRFTSWMGGDRDGNPNVTAEITRHVLLLSRWKATDLFLRDIQVLVSELSMSECTPELRELAGGEEVLEPYRQLMKNVRTQLTNTQAYLEARLKGERVLPPHDLLVSNDQLWEPLYACYQSLKACGMEIIANGQLLDTLRRVRCFGVPLVRIDVRQESTRHTDAIAELTRYLGLGDYESWSESDKQAFLVRELNSKRPLVPLKWEPSAETQEVLETCRVIAEAPQGSIAAYVISMAKVPSDVLAVHLLLKEAGCPFTLPVAPLFETLDDLNNADDVMTQLLGIDWYRGLIQGKQMVMIGYSDSAKDAGVMAASWAQYRAQDALIKTCEKAGITLTLFHGRGGSIGRGGAPAHAALLSQPPGSLKGGLRVTEQGEMIRFKFGLPEVTISSLALYAGAILEANLLPPPEPKKEWIEVMDLLSDASCDMYRSYVRENPEFVRYFRAATPELELGKLPLGSRPAKRRPDGGVESLRAIPWIFAWTQNRLMLPAWLGAGAGLQRAIDAGKRDVLATMCRDWPFFSTRIGMLEMVFAKADLWLAEYYDQRLVDKSLWPLGQQLRDQLAADIKVVLAIANDDHLMADLPWIAESIALRNVYTDPLNVLQAELLHRSRQQEHPDACVEQALMVTIAGVAAGMRNTG.

Active-site residues include H137 and K545.

Belongs to the PEPCase type 1 family. It depends on Mg(2+) as a cofactor.

The catalysed reaction is oxaloacetate + phosphate = phosphoenolpyruvate + hydrogencarbonate. Forms oxaloacetate, a four-carbon dicarboxylic acid source for the tricarboxylic acid cycle. This Yersinia pseudotuberculosis serotype O:1b (strain IP 31758) protein is Phosphoenolpyruvate carboxylase.